The sequence spans 288 residues: Capsid protein (288 aa).

At A2 the chain carries N-acetylalanine; by host.

Belongs to the high plain virus capsid family.

It localises to the virion. The chain is Capsid protein from High plains virus (isolate Kansas 2004).